The sequence spans 530 residues: MEKSSETNGYLDSAQEGPAAGPGEPGTTARRAGRCAGFLRRHGLVLLTVSGVVAGAGLGAALRGLQLNRTQVTYLAFPGEMLLRMLRMIILPLVVCSLVSGAASLDASSLGRLGGIAIAYFGLTTLGASALAVALAFIIKPGSGSQTLQSSDLGLEDSGPPPVPKETVDSFLDLTRNLFPSNLVVAAFRTYATDYREVTYNTSAGKVTIEKIPIGTEIEGMNILGLVLFALVLGVALKKLGSEGEELIRFFNAFNEATMVLVSWIMWYVPVGIMFLVGSKIVEMKDIIMLVTSLGKYIFTSILGHFIHGGIVLPLIYFVFTRKNPFRFLLGLLTPFATAFATCSSSATLPSMMKCIEENNGVDKRISRFILPIGATVNMDGAAIFQCVAAVFIAQLNNVELRAGQIFTILVTATASSVGAAGVPAGGVLTIAIILEAIGLPTHDLSLILAVDWIVDRTTTVVNVEGDALGAGILHHLNQKAMKRGEQELSEVKVEAIPNSKSEEETSPLVTHPNPTGPAASTPESKESVL.

Position 1 is an N-acetylmethionine (methionine 1). Over residues 1-10 (MEKSSETNGY) the composition is skewed to polar residues. Residues 1–28 (MEKSSETNGYLDSAQEGPAAGPGEPGTT) are disordered. The Cytoplasmic portion of the chain corresponds to 1–41 (MEKSSETNGYLDSAQEGPAAGPGEPGTTARRAGRCAGFLRR). The span at 16 to 28 (EGPAAGPGEPGTT) shows a compositional bias: low complexity. 3 helical membrane-spanning segments follow: residues 42–62 (HGLV…GAAL), 88–108 (MIIL…LDAS), and 119–139 (AYFG…AFII). Residues 140-216 (KPGSGSQTLQ…VTIEKIPIGT (77 aa)) lie on the Extracellular side of the membrane. N-linked (GlcNAc...) asparagine glycosylation occurs at asparagine 201. The next 6 helical transmembrane spans lie at 217 to 237 (EIEG…GVAL), 257 to 277 (ATMV…MFLV), 298 to 318 (IFTS…LIYF), 328 to 348 (FLLG…SSAT), 373 to 393 (IGAT…AVFI), and 418 to 438 (VGAA…LEAI). The interval 488–530 (ELSEVKVEAIPNSKSEEETSPLVTHPNPTGPAASTPESKESVL) is disordered. Phosphoserine occurs at positions 507, 525, and 528.

Belongs to the dicarboxylate/amino acid:cation symporter (DAACS) (TC 2.A.23) family. SLC1A4 subfamily.

The protein localises to the membrane. Its subcellular location is the melanosome. It catalyses the reaction L-threonine(in) + Na(+)(in) = L-threonine(out) + Na(+)(out). The catalysed reaction is L-serine(in) + Na(+)(in) = L-serine(out) + Na(+)(out). It carries out the reaction L-cysteine(in) + Na(+)(in) = L-cysteine(out) + Na(+)(out). The enzyme catalyses L-alanine(in) + Na(+)(in) = L-alanine(out) + Na(+)(out). It catalyses the reaction L-proline(in) + Na(+)(in) = L-proline(out) + Na(+)(out). The catalysed reaction is 4-hydroxy-L-proline(in) + Na(+)(in) = 4-hydroxy-L-proline(out) + Na(+)(out). Its function is as follows. Sodium-dependent neutral amino-acid transporter that mediates transport of alanine, serine, cysteine, proline, hydroxyproline and threonine. This chain is Neutral amino acid transporter A (SLC1A4), found in Bos taurus (Bovine).